Here is a 235-residue protein sequence, read N- to C-terminus: uncharacterized protein (235 aa).

The segment at 1–98 (MDTKLSVTGA…NKKNTLHYSK (98 aa)) is disordered. Glycyl lysine isopeptide (Lys-Gly) (interchain with G-Cter in ubiquitin) cross-links involve residues lysine 16 and lysine 35. A compositionally biased stretch (basic residues) spans 38–50 (NGNKKRNKNRNRN). Residues 51–60 (KKTETKEQNE) are compositionally biased toward basic and acidic residues.

This is an uncharacterized protein from Saccharomyces cerevisiae (strain ATCC 204508 / S288c) (Baker's yeast).